Here is a 456-residue protein sequence, read N- to C-terminus: Smoothelin-like protein 2 (456 aa).

A coiled-coil region spans residues 24–88 (LEGAVRALHE…RQVEALGLAT (65 aa)). A Phosphothreonine modification is found at Thr96. 3 positions are modified to phosphoserine: Ser98, Ser126, and Ser131. The segment covering 120–129 (HATFSLSGRS) has biased composition (polar residues). Disordered regions lie at residues 120 to 140 (HATFSLSGRSPSVEHDEASDL), 154 to 190 (GHQLDAGPANGSSEVQTSSAQEPPRPRPVSLSLRMPH), and 220 to 310 (VGGF…GAQA). Positions 131-140 (SVEHDEASDL) are enriched in basic and acidic residues. A compositionally biased stretch (polar residues) spans 163-174 (NGSSEVQTSSAQ). The span at 242 to 251 (SSSFTRSLSG) shows a compositional bias: low complexity. Ser250, Ser252, and Ser265 each carry phosphoserine. Residues 268-279 (LVTPPQSPPSSQ) are compositionally biased toward pro residues. A Phosphothreonine modification is found at Thr270. Ser274 is modified (phosphoserine). The segment covering 298–308 (RSQTLPRTSGA) has biased composition (polar residues). The residue at position 339 (Ser339) is a Phosphoserine. Residues 346-453 (SSIKQILLEW…YVQSLYNHLR (108 aa)) form the Calponin-homology (CH) domain.

This sequence belongs to the smoothelin family.

The chain is Smoothelin-like protein 2 (Smtnl2) from Mus musculus (Mouse).